The primary structure comprises 382 residues: Succinate--CoA ligase [ADP-forming] subunit beta (382 aa).

Residues 9–240 (KELFLRYGVK…PRDITEFEAY (232 aa)) enclose the ATP-grasp domain. ATP contacts are provided by residues lysine 45, 52–54 (GRG), valine 94, and glutamate 99. Residues asparagine 193 and aspartate 207 each contribute to the Mg(2+) site. Residues asparagine 260 and 317-319 (GIT) each bind substrate.

It belongs to the succinate/malate CoA ligase beta subunit family. Heterotetramer of two alpha and two beta subunits. Mg(2+) is required as a cofactor.

It catalyses the reaction succinate + ATP + CoA = succinyl-CoA + ADP + phosphate. The catalysed reaction is GTP + succinate + CoA = succinyl-CoA + GDP + phosphate. It participates in carbohydrate metabolism; tricarboxylic acid cycle; succinate from succinyl-CoA (ligase route): step 1/1. Its function is as follows. Succinyl-CoA synthetase functions in the citric acid cycle (TCA), coupling the hydrolysis of succinyl-CoA to the synthesis of either ATP or GTP and thus represents the only step of substrate-level phosphorylation in the TCA. The beta subunit provides nucleotide specificity of the enzyme and binds the substrate succinate, while the binding sites for coenzyme A and phosphate are found in the alpha subunit. The protein is Succinate--CoA ligase [ADP-forming] subunit beta of Pyrobaculum islandicum (strain DSM 4184 / JCM 9189 / GEO3).